The sequence spans 194 residues: Fe/S biogenesis protein NfuA (194 aa).

Residues cysteine 152 and cysteine 155 each contribute to the [4Fe-4S] cluster site.

Belongs to the NfuA family. In terms of assembly, homodimer. The cofactor is [4Fe-4S] cluster.

Functionally, involved in iron-sulfur cluster biogenesis. Binds a 4Fe-4S cluster, can transfer this cluster to apoproteins, and thereby intervenes in the maturation of Fe/S proteins. Could also act as a scaffold/chaperone for damaged Fe/S proteins. The sequence is that of Fe/S biogenesis protein NfuA from Pseudomonas putida (strain GB-1).